Reading from the N-terminus, the 154-residue chain is Cold shock domain-containing protein C2 (154 aa).

Disordered regions lie at residues 1–22 (MTSESTSPPVVPPLHSPKSPVW) and 36–62 (ERGGGVSPRDLPSPLPTKRTRTYSATA). Position 19 is a phosphoserine (Ser-19). The CSD domain occupies 69 to 136 (VFKGVCKQFS…KFQAVEVVLT (68 aa)).

Brain-specific. Expression restricted to the pyramidal neurons of the cerebral cortex and in the Purkinje cells of the cerebellum.

It localises to the nucleus. Its subcellular location is the cytoplasm. In terms of biological role, RNA-binding factor which binds specifically to the very 3'-UTR ends of both histone H1 and H3.3 mRNAs, encompassing the polyadenylation signal. Might play a central role in the negative regulation of histone variant synthesis in the developing brain. The polypeptide is Cold shock domain-containing protein C2 (Csdc2) (Rattus norvegicus (Rat)).